The following is a 113-amino-acid chain: MELPANVQNQLMQFQQLQQQLQMIMYQKQQFETQLKEMEKAIEEMEKSGSDEVFKMAGGILIKRNKAEVKEELSERVETLQLRVTTFEKQEEKMQKRYTELQENLQKAMGQGQ.

This sequence belongs to the prefoldin subunit beta family. Heterohexamer of two alpha and four beta subunits.

Its subcellular location is the cytoplasm. Its function is as follows. Molecular chaperone capable of stabilizing a range of proteins. Seems to fulfill an ATP-independent, HSP70-like function in archaeal de novo protein folding. In Methanococcus maripaludis (strain C7 / ATCC BAA-1331), this protein is Prefoldin subunit beta.